The chain runs to 336 residues: DNA-directed RNA polymerase subunit alpha (336 aa).

Residues 1-235 (MIEFVIPKKL…HFKIVTEGLP (235 aa)) form an alpha N-terminal domain (alpha-NTD) region. Residues 264 to 336 (RENSDVYNRK…KFGLELRKGE (73 aa)) are alpha C-terminal domain (alpha-CTD).

The protein belongs to the RNA polymerase alpha chain family. Homodimer. The RNAP catalytic core consists of 2 alpha, 1 beta, 1 beta' and 1 omega subunit. When a sigma factor is associated with the core the holoenzyme is formed, which can initiate transcription.

The enzyme catalyses RNA(n) + a ribonucleoside 5'-triphosphate = RNA(n+1) + diphosphate. In terms of biological role, DNA-dependent RNA polymerase catalyzes the transcription of DNA into RNA using the four ribonucleoside triphosphates as substrates. This chain is DNA-directed RNA polymerase subunit alpha, found in Thermotoga maritima (strain ATCC 43589 / DSM 3109 / JCM 10099 / NBRC 100826 / MSB8).